A 124-amino-acid polypeptide reads, in one-letter code: MNNILFVALGGSIGAVFRYLLSIFMLQLFGSAFPFGTLLVNVIGSFLMGTIYALGQVSQVSPEIKALVGVGLLGALTTFSTFSNETLLLIQSGAWIKAFFNIALNLCLCIFMVYLGQQLVFSRI.

3 helical membrane passes run 5 to 27 (LFVA…FMLQ), 70 to 90 (VGLL…LLLI), and 95 to 115 (WIKA…MVYL). Positions 74 and 77 each coordinate Na(+).

This sequence belongs to the fluoride channel Fluc/FEX (TC 1.A.43) family.

It localises to the cell inner membrane. The catalysed reaction is fluoride(in) = fluoride(out). Its activity is regulated as follows. Na(+) is not transported, but it plays an essential structural role and its presence is essential for fluoride channel function. In terms of biological role, fluoride-specific ion channel. Important for reducing fluoride concentration in the cell, thus reducing its toxicity. The polypeptide is Fluoride-specific ion channel FluC (Shewanella sediminis (strain HAW-EB3)).